The primary structure comprises 649 residues: Glycerol-3-phosphate dehydrogenase, mitochondrial (649 aa).

69–97 contributes to the FAD binding site; sequence DVLIIGGGATGTGVAVDASTRGLNVCLLE.

It belongs to the FAD-dependent glycerol-3-phosphate dehydrogenase family. FAD is required as a cofactor.

The protein resides in the mitochondrion. The enzyme catalyses a quinone + sn-glycerol 3-phosphate = dihydroxyacetone phosphate + a quinol. Its pathway is polyol metabolism; glycerol degradation via glycerol kinase pathway; glycerone phosphate from sn-glycerol 3-phosphate (anaerobic route): step 1/1. This is Glycerol-3-phosphate dehydrogenase, mitochondrial (gut2) from Schizosaccharomyces pombe (strain 972 / ATCC 24843) (Fission yeast).